A 244-amino-acid chain; its full sequence is uncharacterized protein (244 aa).

A disordered region spans residues 30 to 49; that stretch reads RETNESPKSQNPSEEATTVN. Polar residues predominate over residues 35–49; that stretch reads SPKSQNPSEEATTVN. Helical transmembrane passes span 96-116, 128-148, 171-191, and 194-214; these read LWGTCVILSTLFWSYYVLSNS, LLFILIIALDALLTVSLFGLF, GFFINVLSTMVQALVTVTIAF, and FVTIDFPIYVFSSLFLYHPLS. The disordered stretch occupies residues 224 to 244; the sequence is QLDGSGERKTDSSLVHQNPPN. Residues 235–244 show a composition bias toward polar residues; it reads SSLVHQNPPN.

The protein localises to the nucleus membrane. This is an uncharacterized protein from Schizosaccharomyces pombe (strain 972 / ATCC 24843) (Fission yeast).